We begin with the raw amino-acid sequence, 200 residues long: dITP/XTP pyrophosphatase (200 aa).

A substrate-binding site is contributed by 16–21 (SNNDGK). Mg(2+) is bound by residues Glu-46 and Asp-75. The active-site Proton acceptor is the Asp-75. Residues Ser-76, 154–157 (FGYD), Lys-177, and 182–183 (HR) contribute to the substrate site.

Belongs to the HAM1 NTPase family. In terms of assembly, homodimer. Mg(2+) is required as a cofactor.

It catalyses the reaction XTP + H2O = XMP + diphosphate + H(+). It carries out the reaction dITP + H2O = dIMP + diphosphate + H(+). The enzyme catalyses ITP + H2O = IMP + diphosphate + H(+). Pyrophosphatase that catalyzes the hydrolysis of nucleoside triphosphates to their monophosphate derivatives, with a high preference for the non-canonical purine nucleotides XTP (xanthosine triphosphate), dITP (deoxyinosine triphosphate) and ITP. Seems to function as a house-cleaning enzyme that removes non-canonical purine nucleotides from the nucleotide pool, thus preventing their incorporation into DNA/RNA and avoiding chromosomal lesions. This is dITP/XTP pyrophosphatase from Prochlorococcus marinus (strain SARG / CCMP1375 / SS120).